The following is a 596-amino-acid chain: Elongation factor 4 (596 aa).

In terms of domain architecture, tr-type G spans 2-184; the sequence is DHIRNFSIIA…AVVARIPPPK (183 aa). GTP is bound by residues 14 to 19 and 131 to 134; these read DHGKST and NKID.

It belongs to the TRAFAC class translation factor GTPase superfamily. Classic translation factor GTPase family. LepA subfamily.

Its subcellular location is the cell inner membrane. The enzyme catalyses GTP + H2O = GDP + phosphate + H(+). Its function is as follows. Required for accurate and efficient protein synthesis under certain stress conditions. May act as a fidelity factor of the translation reaction, by catalyzing a one-codon backward translocation of tRNAs on improperly translocated ribosomes. Back-translocation proceeds from a post-translocation (POST) complex to a pre-translocation (PRE) complex, thus giving elongation factor G a second chance to translocate the tRNAs correctly. Binds to ribosomes in a GTP-dependent manner. The chain is Elongation factor 4 from Dechloromonas aromatica (strain RCB).